The primary structure comprises 268 residues: UPF0328 protein ECU05_1640/ECU11_0090 (268 aa).

This sequence belongs to the UPF0328 family.

The chain is UPF0328 protein ECU05_1640/ECU11_0090 from Encephalitozoon cuniculi (strain GB-M1) (Microsporidian parasite).